The primary structure comprises 430 residues: Tapasin (430 aa).

An N-terminal signal peptide occupies residues M1–S15. The Lumenal segment spans residues Q16–T399. A disulfide bridge connects residues C34 and C99. The segment at G61 to G128 is disordered. N-linked (GlcNAc...) asparagine glycosylation is present at N78. The span at L101–D111 shows a compositional bias: polar residues. 2 consecutive Ig-like C1-type domains span residues P139–H273 and P278–S382. C299 and C368 are disulfide-bonded. A disordered region spans residues R316–A342. Positions T322–H338 are enriched in polar residues. A helical transmembrane segment spans residues G400–P417. Over K418–Q430 the chain is Cytoplasmic.

In terms of assembly, interacts with TAP1 and is thus a subunit of the TAP complex. Interaction with TAP1 is TAP2 independent and is required for efficient peptide-TAP interaction. Obligatory mediator for the interaction between newly assembled MHC class I molecules, calreticulin, ERp57 and TAP. Up to 4 MHC class I/tapasin complexes bind to 1 TAP.

Its subcellular location is the endoplasmic reticulum membrane. In terms of biological role, involved in the association of MHC class I with transporter associated with antigen processing (TAP) and in the assembly of MHC class I with peptide (peptide loading). The chain is Tapasin (TAPBP) from Gallus gallus (Chicken).